Consider the following 230-residue polypeptide: Large ribosomal subunit protein uL1c (230 aa).

This sequence belongs to the universal ribosomal protein uL1 family. Part of the 50S ribosomal subunit.

The protein resides in the plastid. The protein localises to the chloroplast. Binds directly to 23S rRNA. Might be involved in E site tRNA release (Potential). The polypeptide is Large ribosomal subunit protein uL1c (rpl1) (Phaeodactylum tricornutum (strain CCAP 1055/1)).